The primary structure comprises 349 residues: GDP-mannose:glycolipid 4-beta-D-mannosyltransferase (349 aa).

Positions methionine 1–alanine 14 are cleaved as a signal peptide.

It belongs to the glycosyltransferase 94 family.

The protein localises to the cell inner membrane. The catalysed reaction is beta-D-GlcA-(1-&gt;2)-alpha-D-Man-(1-&gt;3)-beta-D-Glc-(1-&gt;4)-alpha-D-Glc-di-trans,octa-cis-undecaprenyl diphosphate + GDP-alpha-D-mannose = beta-D-Man-(1-&gt;4)-beta-D-GlcA-(1-&gt;2)-alpha-D-Man-(1-&gt;3)-beta-D-Glc-(1-&gt;4)-alpha-D-Glc-di-trans,octa-cis-undecaprenyl diphosphate + GDP + H(+). It functions in the pathway glycan biosynthesis; xanthan biosynthesis. Functionally, nonprocessive beta-mannosyltransferase that catalyzes the transfer of a mannose residue from GDP-mannose to glucuronic acid-beta-1,2-mannose-alpha-1,3-glucose-beta-1,4-glucose-PP-polyisoprenyl to form the lipid-linked pentasaccharide repeating unit of xanthan, Man-GlcA-Man-Glc(2)-PP-Pol. Is involved in the biosynthesis of the exopolysaccharide xanthan. To a lesser extent, can also use ADP-Man and even GDP-Glc as sugar donor substrates in vitro. Is unable to transfer a Man residue to the free-tetrasaccharide GlcA-Man-Glc(2) used as an acceptor, which indicates that the diphosphate group and the lipid moiety in the acceptor substrate are of major importance for acceptor binding and catalysis. The protein is GDP-mannose:glycolipid 4-beta-D-mannosyltransferase (gumI) of Xanthomonas campestris pv. campestris.